The following is an 844-amino-acid chain: Translation initiation factor IF-2 (844 aa).

A compositionally biased stretch (polar residues) spans R120–K132. A disordered region spans residues R120–P220. Basic and acidic residues predominate over residues D161–N175. Positions S205–N219 are enriched in basic residues. The tr-type G domain maps to S343 to E510. A G1 region spans residues G352–T359. G352–T359 is a GTP binding site. Residues G377 to H381 are G2. The segment at D398–G401 is G3. Residues D398–H402 and N452–D455 each bind GTP. The interval N452–D455 is G4. The segment at S488–K490 is G5.

The protein belongs to the TRAFAC class translation factor GTPase superfamily. Classic translation factor GTPase family. IF-2 subfamily.

Its subcellular location is the cytoplasm. Its function is as follows. One of the essential components for the initiation of protein synthesis. Protects formylmethionyl-tRNA from spontaneous hydrolysis and promotes its binding to the 30S ribosomal subunits. Also involved in the hydrolysis of GTP during the formation of the 70S ribosomal complex. This is Translation initiation factor IF-2 from Francisella philomiragia subsp. philomiragia (strain ATCC 25017 / CCUG 19701 / FSC 153 / O#319-036).